A 476-amino-acid polypeptide reads, in one-letter code: DnaJ protein P58IPK homolog A (476 aa).

The signal sequence occupies residues 1-28 (MVAMARWPWRVLLPLLLLHSSPVFFVFA). TPR repeat units follow at residues 36-69 (PSTL…EPNH), 70-103 (SEAY…KPGS), 116-150 (AQNA…SPDC), 152-184 (KAKL…DEDN), 185-218 (LDAL…DPEH), 231-264 (LVKK…DPDH), 269-302 (VHLY…DGEL), and 304-336 (DALT…SPQD). The J domain maps to 357–423 (DWYKILGISK…DKRVRYDRGE (67 aa)).

Interacts with BIP1.

Its subcellular location is the endoplasmic reticulum lumen. May play a role in protein folding in the endoplasmic reticulum. This Oryza sativa subsp. japonica (Rice) protein is DnaJ protein P58IPK homolog A.